The primary structure comprises 100 residues: NAD(P)H-quinone oxidoreductase subunit 4L, chloroplastic (100 aa).

3 consecutive transmembrane segments (helical) span residues 1-21, 29-49, and 63-83; these read MIEN…YGLI, ALMC…TFSN, and ISVI…ILII.

It belongs to the complex I subunit 4L family. In terms of assembly, NDH is composed of at least 16 different subunits, 5 of which are encoded in the nucleus.

The protein localises to the plastid. It is found in the chloroplast thylakoid membrane. The enzyme catalyses a plastoquinone + NADH + (n+1) H(+)(in) = a plastoquinol + NAD(+) + n H(+)(out). It catalyses the reaction a plastoquinone + NADPH + (n+1) H(+)(in) = a plastoquinol + NADP(+) + n H(+)(out). Its function is as follows. NDH shuttles electrons from NAD(P)H:plastoquinone, via FMN and iron-sulfur (Fe-S) centers, to quinones in the photosynthetic chain and possibly in a chloroplast respiratory chain. The immediate electron acceptor for the enzyme in this species is believed to be plastoquinone. Couples the redox reaction to proton translocation, and thus conserves the redox energy in a proton gradient. In Angiopteris evecta (Mule's foot fern), this protein is NAD(P)H-quinone oxidoreductase subunit 4L, chloroplastic.